We begin with the raw amino-acid sequence, 617 residues long: Na(+)/H(+) antiporter NhaA 1 (617 aa).

The interval 1–26 (MTVTEPATQRGFPLLPSRLSRGSKAT) is disordered. The segment at 1-433 (MTVTEPATQR…GWAIFRITDW (433 aa)) is na(+)/H(+) antiporter NhaA. The next 11 membrane-spanning stretches (helical) occupy residues 33–53 (AAALLLTFTVVAILWANSPWA), 75–95 (MTVKHVVNDALMTFFFFIVGL), 113–133 (AVPVVAAAAGLILPAVVFLAF), 141–161 (HAWGVVISTDTAFLVGALAII), 171–191 (LFLLTLAVVDDVGALIAIAVL), 198–218 (VAPLVVAVALLGALALVRYLP), 234–254 (IALYLAGIHPTLAGVAVALLI), 304–324 (VSPVVSFVILPLFALVNAGVL), 341–361 (GIVAGLVVGKFVGIAGATWLI), 378–398 (IAGGAALSGIGFTISLFIVDI), and 411–431 (IGVLAASVLAFALGWAIFRIT). The 184-residue stretch at 434–617 (LSPPEPVGLK…LIRALEAGRG (184 aa)) folds into the Thioredoxin domain.

The protein in the N-terminal section; belongs to the NhaA Na(+)/H(+) (TC 2.A.33) antiporter family.

The protein resides in the cell membrane. It catalyses the reaction Na(+)(in) + 2 H(+)(out) = Na(+)(out) + 2 H(+)(in). In terms of biological role, na(+)/H(+) antiporter that extrudes sodium in exchange for external protons. The chain is Na(+)/H(+) antiporter NhaA 1 from Mycolicibacterium gilvum (strain PYR-GCK) (Mycobacterium gilvum (strain PYR-GCK)).